Here is a 790-residue protein sequence, read N- to C-terminus: B3 domain-containing transcription repressor VAL1 (790 aa).

The segment at Lys234–Glu260 is disordered. Positions Phe295–Ala396 form a DNA-binding region, TF-B3. 2 disordered regions span residues Asp400 to Gly429 and Asn446 to Arg468. The span at Gly405–Gly429 shows a compositional bias: polar residues. The CW-type zinc finger occupies Ser538–Lys588. Zn(2+)-binding residues include Cys547, Cys550, Cys568, and Cys580. Residues Leu685–Ser732 are a coiled coil. The interval Arg689–Lys737 is disordered. Positions Leu694 to Asn724 are enriched in basic and acidic residues.

In terms of assembly, interacts with SNL1. Expressed in flowers and at lower levels in roots, stems and leaves.

Its subcellular location is the nucleus. Its function is as follows. Transcriptional repressor of gene expression involved in embryonic pathways, such as LEC1, ABI3, and FUS3. Repressor of the sugar-inducible genes involved in the seed maturation program in seedlings. Plays an essential role in regulating the transition from seed maturation to seedling growth. Functionally redundant with VAL2/HSL1. The chain is B3 domain-containing transcription repressor VAL1 (VAL1) from Arabidopsis thaliana (Mouse-ear cress).